A 402-amino-acid polypeptide reads, in one-letter code: ORC1-type DNA replication protein 17 (402 aa).

ATP contacts are provided by tyrosine 223 and arginine 235.

Belongs to the CDC6/cdc18 family.

Involved in regulation of DNA replication. The polypeptide is ORC1-type DNA replication protein 17 (cdc6q) (Haloarcula marismortui (strain ATCC 43049 / DSM 3752 / JCM 8966 / VKM B-1809) (Halobacterium marismortui)).